The primary structure comprises 427 residues: Putative F-box protein At4g10740 (427 aa).

Residues 2 to 47 form the F-box domain; sequence RTTMSNLPKELVEDIVSRVPLHCLRAMRLTCKNWNALLESQSFKKM.

This Arabidopsis thaliana (Mouse-ear cress) protein is Putative F-box protein At4g10740.